A 711-amino-acid chain; its full sequence is Polyribonucleotide nucleotidyltransferase (711 aa).

Mg(2+)-binding residues include D490 and D496. The region spanning 556 to 615 (PRIETMQIPTDKIREVIGSGGKVIREIVEVSGAKVDINDEGIIKIASPNGEAIKKAYDMI) is the KH domain. The region spanning 625–693 (GMVYTGTVVK…DRGKVRLSMK (69 aa)) is the S1 motif domain.

This sequence belongs to the polyribonucleotide nucleotidyltransferase family. Mg(2+) serves as cofactor.

The protein localises to the cytoplasm. It catalyses the reaction RNA(n+1) + phosphate = RNA(n) + a ribonucleoside 5'-diphosphate. Involved in mRNA degradation. Catalyzes the phosphorolysis of single-stranded polyribonucleotides processively in the 3'- to 5'-direction. The sequence is that of Polyribonucleotide nucleotidyltransferase from Roseobacter denitrificans (strain ATCC 33942 / OCh 114) (Erythrobacter sp. (strain OCh 114)).